The sequence spans 182 residues: Large ribosomal subunit protein uL6 (182 aa).

It belongs to the universal ribosomal protein uL6 family. In terms of assembly, part of the 50S ribosomal subunit.

In terms of biological role, this protein binds to the 23S rRNA, and is important in its secondary structure. It is located near the subunit interface in the base of the L7/L12 stalk, and near the tRNA binding site of the peptidyltransferase center. This chain is Large ribosomal subunit protein uL6, found in Aeropyrum pernix (strain ATCC 700893 / DSM 11879 / JCM 9820 / NBRC 100138 / K1).